Here is a 498-residue protein sequence, read N- to C-terminus: Lysine--tRNA ligase (498 aa).

2 residues coordinate Mg(2+): Glu-407 and Glu-414.

This sequence belongs to the class-II aminoacyl-tRNA synthetase family. In terms of assembly, homodimer. Mg(2+) serves as cofactor.

The protein localises to the cytoplasm. The catalysed reaction is tRNA(Lys) + L-lysine + ATP = L-lysyl-tRNA(Lys) + AMP + diphosphate. This is Lysine--tRNA ligase from Rhizobium johnstonii (strain DSM 114642 / LMG 32736 / 3841) (Rhizobium leguminosarum bv. viciae).